Here is a 940-residue protein sequence, read N- to C-terminus: Phosphoenolpyruvate carboxylase (940 aa).

Residues His-138 and Lys-603 contribute to the active site.

It belongs to the PEPCase type 1 family. Mg(2+) serves as cofactor.

The enzyme catalyses oxaloacetate + phosphate = phosphoenolpyruvate + hydrogencarbonate. Functionally, forms oxaloacetate, a four-carbon dicarboxylic acid source for the tricarboxylic acid cycle. This Streptococcus thermophilus (strain ATCC BAA-491 / LMD-9) protein is Phosphoenolpyruvate carboxylase.